The following is a 163-amino-acid chain: ATP synthase subunit b 1 (163 aa).

Residues 5–25 traverse the membrane as a helical segment; that stretch reads FDATFFAFVGLVLFLALVVYL.

Belongs to the ATPase B chain family. As to quaternary structure, F-type ATPases have 2 components, F(1) - the catalytic core - and F(0) - the membrane proton channel. F(1) has five subunits: alpha(3), beta(3), gamma(1), delta(1), epsilon(1). F(0) has three main subunits: a(1), b(2) and c(10-14). The alpha and beta chains form an alternating ring which encloses part of the gamma chain. F(1) is attached to F(0) by a central stalk formed by the gamma and epsilon chains, while a peripheral stalk is formed by the delta and b chains.

It is found in the cell inner membrane. Its function is as follows. F(1)F(0) ATP synthase produces ATP from ADP in the presence of a proton or sodium gradient. F-type ATPases consist of two structural domains, F(1) containing the extramembraneous catalytic core and F(0) containing the membrane proton channel, linked together by a central stalk and a peripheral stalk. During catalysis, ATP synthesis in the catalytic domain of F(1) is coupled via a rotary mechanism of the central stalk subunits to proton translocation. In terms of biological role, component of the F(0) channel, it forms part of the peripheral stalk, linking F(1) to F(0). The polypeptide is ATP synthase subunit b 1 (Rhizobium leguminosarum bv. trifolii (strain WSM2304)).